Consider the following 1135-residue polypeptide: Potassium channel subfamily T member 2 (1135 aa).

Residues 1 to 63 (MVDLESEVPP…KNQRSSLRIR (63 aa)) lie on the Cytoplasmic side of the membrane. Residues 64–84 (LFNFSLKLLSCLLYIIRVLLE) form a helical membrane-spanning segment. Over 85 to 101 (KPSQGSEWSHIFWVNRS) the chain is Extracellular. A helical transmembrane segment spans residues 102–122 (LPLWGLQVSVALISLFETILL). Residues 123 to 137 (GYLSYKGNIWEQILR) lie on the Cytoplasmic side of the membrane. A helical transmembrane segment spans residues 138 to 158 (IPFILEIINAVPFIISIFWPT). Residues 159 to 164 (LRNLFV) are Extracellular-facing. The helical transmembrane segment at 165-185 (PVFLNCWLAKHALENMINDLH) threads the bilayer. The Cytoplasmic portion of the chain corresponds to 186 to 198 (RAIQRTQSAMFNQ). The helical transmembrane segment at 199–219 (VLILISTLLCLIFTCICGIQH) threads the bilayer. Residues 220 to 228 (LERIGKKLN) are Extracellular-facing. The segment at residues 229-249 (LFDSLYFCIVTFSTVGFGDVT) is an intramembrane region (pore-forming). The Extracellular segment spans residues 250–256 (PETWSSK). A helical membrane pass occupies residues 257 to 277 (LFVVAMICVALVVLPIQFEQL). Residues 278-1135 (AYLWMERQKS…VQDSREETQL (858 aa)) are Cytoplasmic-facing. RCK N-terminal domains follow at residues 299–435 (EKHV…DHVV) and 718–858 (NKLI…CYSL). 2 disordered regions span residues 982–1036 (DTKD…AEKI) and 1111–1135 (PNSEPSRKNSICNAAVQDSREETQL). The span at 1010 to 1030 (LRRKSMQWARRLSRKGPKHSG) shows a compositional bias: basic residues. Over residues 1111-1122 (PNSEPSRKNSIC) the composition is skewed to polar residues.

This sequence belongs to the potassium channel family. Calcium-activated (TC 1.A.1.3) subfamily. KCa4.2/KCNT2 sub-subfamily. Homotetramer. Forms heteromeric channels with KCNT1. These heterodimer channels differ from the homomers in their unitary conductance, kinetic behavior, subcellular localization, and response to activation of protein kinase C. Post-translationally, phosphorylated by protein kinase C. Phosphorylation of the C-terminal domain inhibits channel activity. Within the dorsal root ganglia (DRGs), exclusively expressed in small-sized and medium-sized calcitonin gene-related peptide (CGRP)-containing DRG neurons.

The protein localises to the cell membrane. The catalysed reaction is K(+)(in) = K(+)(out). Are normally in a closed state unless activated by an increase in intracellular Na(+) and Cl(-). Inhibited upon stimulation of G-protein coupled receptors, such as CHRM1 and GRM1. There is conflicting data about the effect of ATP on KNCT2 channels activity. Intracellular ATP was initially report to inhibit the channel activity. However, others studies conclude that KNCT2 channels are not inhibited by intracellular ATP. In terms of biological role, sodium-activated and chloride-activated potassium channel. Produces rapidly activating outward rectifier K(+) currents. Contributes to regulate neuronal excitability. The sequence is that of Potassium channel subfamily T member 2 (Kcnt2) from Mus musculus (Mouse).